A 1645-amino-acid chain; its full sequence is Protein MON2 homolog (1645 aa).

The protein belongs to the MON2 family.

Its function is as follows. May be required for traffic between late Golgi and early endosomes. This is Protein MON2 homolog from Caenorhabditis briggsae.